The primary structure comprises 113 residues: MTVARHAVSRLGLALASFLLFPLALAAAPAAERQATLDHLLLQDCGSCHGLRMTGGLGPALTREALAGKPRDSLIATVTHGRPGTAMPGWNALLDEQDIAYLVDRLLEGYPKP.

A signal peptide spans 1-26 (MTVARHAVSRLGLALASFLLFPLALA). Positions 45, 48, and 49 each coordinate heme c.

Binds 1 heme c group covalently per subunit.

The protein localises to the periplasm. Its function is as follows. Monoheme c-type cytochrome. The sequence is that of Cytochrome c55X (nirC) from Stutzerimonas stutzeri (Pseudomonas stutzeri).